The sequence spans 481 residues: Arginine biosynthesis bifunctional protein ArgJ, chloroplastic (481 aa).

The substrate site is built by Thr225, Lys251, Thr262, Glu349, Asn476, and Thr481. Thr262 (nucleophile) is an active-site residue.

Belongs to the ArgJ family. As to quaternary structure, heterodimer of an alpha and a beta chain.

The protein resides in the plastid. Its subcellular location is the chloroplast. It catalyses the reaction N(2)-acetyl-L-ornithine + L-glutamate = N-acetyl-L-glutamate + L-ornithine. The catalysed reaction is L-glutamate + acetyl-CoA = N-acetyl-L-glutamate + CoA + H(+). It functions in the pathway amino-acid biosynthesis; L-arginine biosynthesis; L-ornithine and N-acetyl-L-glutamate from L-glutamate and N(2)-acetyl-L-ornithine (cyclic): step 1/1. Its pathway is amino-acid biosynthesis; L-arginine biosynthesis; N(2)-acetyl-L-ornithine from L-glutamate: step 1/4. Functionally, catalyzes two activities which are involved in the cyclic version of arginine biosynthesis: the synthesis of acetylglutamate from glutamate and acetyl-CoA, and of ornithine by transacetylation between acetylornithine and glutamate. The sequence is that of Arginine biosynthesis bifunctional protein ArgJ, chloroplastic from Populus trichocarpa (Western balsam poplar).